The following is a 98-amino-acid chain: PE family immunomodulator PE35 (98 aa).

The PE domain occupies 1–90 (MEKMSHDPIA…DVARTYSQID (90 aa)).

It belongs to the mycobacterial PE family. As to quaternary structure, interacts with PPE68. PE35/PPE68 complex interacts with human TLR2.

It is found in the secreted. It localises to the cell surface. Functionally, plays a major role in RD1-associated pathogenesis, and may contribute to the establishment and maintenance of M.tuberculosis infection. Together with PPE68, stimulates the secretion of IL-10 and MCP-1 from human macrophages, via the interaction with human Toll-like receptor 2 (TLR2). This chain is PE family immunomodulator PE35 (PE35), found in Mycobacterium tuberculosis (strain CDC 1551 / Oshkosh).